Consider the following 516-residue polypeptide: Protein DML1 (516 aa).

Belongs to the misato family.

It localises to the mitochondrion. Functionally, involved in the partitioning of the mitochondrial organelle and mitochondrial DNA (mtDNA) inheritance. The chain is Protein DML1 (DML1) from Coccidioides immitis (strain RS) (Valley fever fungus).